We begin with the raw amino-acid sequence, 232 residues long: Enolase-phosphatase E1 (232 aa).

This sequence belongs to the HAD-like hydrolase superfamily. MasA/MtnC family. In terms of assembly, monomer. The cofactor is Mg(2+).

It catalyses the reaction 5-methylsulfanyl-2,3-dioxopentyl phosphate + H2O = 1,2-dihydroxy-5-(methylsulfanyl)pent-1-en-3-one + phosphate. It functions in the pathway amino-acid biosynthesis; L-methionine biosynthesis via salvage pathway; L-methionine from S-methyl-5-thio-alpha-D-ribose 1-phosphate: step 3/6. The protein operates within amino-acid biosynthesis; L-methionine biosynthesis via salvage pathway; L-methionine from S-methyl-5-thio-alpha-D-ribose 1-phosphate: step 4/6. Functionally, bifunctional enzyme that catalyzes the enolization of 2,3-diketo-5-methylthiopentyl-1-phosphate (DK-MTP-1-P) into the intermediate 2-hydroxy-3-keto-5-methylthiopentenyl-1-phosphate (HK-MTPenyl-1-P), which is then dephosphorylated to form the acireductone 1,2-dihydroxy-3-keto-5-methylthiopentene (DHK-MTPene). This chain is Enolase-phosphatase E1, found in Xanthomonas campestris pv. campestris (strain 8004).